We begin with the raw amino-acid sequence, 489 residues long: Homoserine O-acetyltransferase (489 aa).

Residues 63 to 435 (NALVICHALS…SPEGHDAFLL (373 aa)) form the AB hydrolase-1 domain. The active site involves Ser-162. Catalysis depends on Ser-162, which acts as the Nucleophile. Residues 247–272 (RFGRNVPDPSKRQNINGTERLPTPPN) are disordered. Catalysis depends on residues Asp-401 and His-430.

The protein belongs to the AB hydrolase superfamily. MetX family.

The enzyme catalyses L-homoserine + acetyl-CoA = O-acetyl-L-homoserine + CoA. The protein operates within amino-acid biosynthesis; L-methionine biosynthesis via de novo pathway; O-acetyl-L-homoserine from L-homoserine: step 1/1. Commits homoserine to the methionine biosynthesis pathway by catalyzing its O-acetylation. The sequence is that of Homoserine O-acetyltransferase (metE) from Emericella nidulans (strain FGSC A4 / ATCC 38163 / CBS 112.46 / NRRL 194 / M139) (Aspergillus nidulans).